An 832-amino-acid chain; its full sequence is MSMSHLYGRRGDEEEEDGVEIEKFEVSEWDLANEFNPDRRRYRQTKEEATYGIWAEQDSDDERPSFGGKRAKDYSTPVSFVSAGLRKTAAEEKAEREGSDDSDAEEAPPPPRAAAPKKLQTGGSFKTSQRFAGGIRTGQDLGNWEKHTRGIGQKLLQKMGYVPGKGLGKNAQGIVNPIEAKLRKGKGAVGAYGSERTQQSLQDFPVVDSEEEEEEEFQKELGQWRKEPGTAKKKPKYSYRTVDDLKAHGTRANMSMSRPAGELAQVKVIDMTGREQKVYNSYSHMSQKHSVPEEAPLSVSTREQKSSGFALPELEHNLKLLIELTEQDILQSARLLQHEKDTVVTLTHESDALQVRLAEEEETLGRLEQVMSLVERFEAGDKEGDPALSLQECAKIFEQLQTEFYQEYKTMGLGDLAVSVVHPLLKEKLRNWDPLKDCSDGLEEVGQWRAILESTLSLHSGPDTTNMDPYHRLIWEVWVPVMRTCVSQWQPRNVGPMVDCVECWAPVLPLWILDHVLEQLIFPRLQREVDNWNPLTDTVPIHSWIHPWLPLMQTRLEPLYAPIRSKLAHALQRWHPSDSSARLILQPWRDVFTPGAWEAFMVKNIVPKLALCLGELVVNPHQQLLDPFNWVMDWECMLSVSSMVGLLDKNFFPKWLQVLCSWLSNNPNYEEITKWYLGWKGLLSENLLSHPLVKEKLNEALDIMNRAVASGLGGYMQPGARENIAYLIQTERRKDFQCELQPERREVDNSATRPPGMAAVPASVPTNFKDLVQAKAEENGIVFMPLVAKRHMGKQLFTFGRIVIYIERGVVFVQGEKTWVPTSLQSLIDMAK.

Disordered stretches follow at residues 1–21 (MSMS…GVEI) and 33–145 (NEFN…GNWE). Composition is skewed to basic and acidic residues over residues 36–49 (NPDR…KEEA) and 88–99 (TAAEEKAEREGS). Residues 121 to 130 (TGGSFKTSQR) are compositionally biased toward polar residues. Residues 148–194 (TRGIGQKLLQKMGYVPGKGLGKNAQGIVNPIEAKLRKGKGAVGAYGS) form the G-patch domain. At S209 the chain carries Phosphoserine.

It belongs to the TFP11/STIP family. Identified in the spliceosome C complex.

The protein resides in the nucleus. Its function is as follows. Involved in pre-mRNA splicing, specifically in spliceosome disassembly during late-stage splicing events. In Danio rerio (Zebrafish), this protein is Tuftelin-interacting protein 11 (tfip11).